The primary structure comprises 92 residues: Signal recognition particle 19 kDa protein (92 aa).

This sequence belongs to the SRP19 family. In terms of assembly, part of the signal recognition particle protein translocation system, which is composed of SRP and FtsY. Archaeal SRP consists of a 7S RNA molecule of 300 nucleotides and two protein subunits: SRP54 and SRP19.

The protein resides in the cytoplasm. Functionally, involved in targeting and insertion of nascent membrane proteins into the cytoplasmic membrane. Binds directly to 7S RNA and mediates binding of the 54 kDa subunit of the SRP. This is Signal recognition particle 19 kDa protein from Halorubrum lacusprofundi (strain ATCC 49239 / DSM 5036 / JCM 8891 / ACAM 34).